The sequence spans 363 residues: 3-isopropylmalate dehydrogenase (363 aa).

An NAD(+)-binding site is contributed by glycine 78 to glutamate 91. Residues arginine 99, arginine 109, arginine 138, and aspartate 227 each contribute to the substrate site. Positions 227, 251, and 255 each coordinate Mg(2+). Glycine 285–asparagine 297 contributes to the NAD(+) binding site.

The protein belongs to the isocitrate and isopropylmalate dehydrogenases family. LeuB type 1 subfamily. In terms of assembly, homodimer. It depends on Mg(2+) as a cofactor. Mn(2+) is required as a cofactor.

Its subcellular location is the cytoplasm. The catalysed reaction is (2R,3S)-3-isopropylmalate + NAD(+) = 4-methyl-2-oxopentanoate + CO2 + NADH. It participates in amino-acid biosynthesis; L-leucine biosynthesis; L-leucine from 3-methyl-2-oxobutanoate: step 3/4. Its function is as follows. Catalyzes the oxidation of 3-carboxy-2-hydroxy-4-methylpentanoate (3-isopropylmalate) to 3-carboxy-4-methyl-2-oxopentanoate. The product decarboxylates to 4-methyl-2 oxopentanoate. This chain is 3-isopropylmalate dehydrogenase, found in Pectobacterium atrosepticum (strain SCRI 1043 / ATCC BAA-672) (Erwinia carotovora subsp. atroseptica).